The sequence spans 101 residues: Urease subunit gamma (101 aa).

Belongs to the urease gamma subunit family. Heterotrimer of UreA (gamma), UreB (beta) and UreC (alpha) subunits. Three heterotrimers associate to form the active enzyme.

It is found in the cytoplasm. The enzyme catalyses urea + 2 H2O + H(+) = hydrogencarbonate + 2 NH4(+). It functions in the pathway nitrogen metabolism; urea degradation; CO(2) and NH(3) from urea (urease route): step 1/1. This chain is Urease subunit gamma, found in Ureaplasma urealyticum (Ureaplasma urealyticum biotype 2).